The chain runs to 82 residues: Photosystem I iron-sulfur center (82 aa).

4Fe-4S ferredoxin-type domains are found at residues 2–31 (SHTV…MVPW) and 37–68 (GQIA…VRVY). Residues cysteine 11, cysteine 14, cysteine 17, cysteine 21, cysteine 48, cysteine 51, cysteine 54, and cysteine 58 each contribute to the [4Fe-4S] cluster site.

The eukaryotic PSI reaction center is composed of at least 11 subunits. The cofactor is [4Fe-4S] cluster.

It is found in the plastid. The protein resides in the chloroplast thylakoid membrane. The catalysed reaction is reduced [plastocyanin] + hnu + oxidized [2Fe-2S]-[ferredoxin] = oxidized [plastocyanin] + reduced [2Fe-2S]-[ferredoxin]. Its function is as follows. Apoprotein for the two 4Fe-4S centers FA and FB of photosystem I (PSI); essential for photochemical activity. FB is the terminal electron acceptor of PSI, donating electrons to ferredoxin. The C-terminus interacts with PsaA/B/D and helps assemble the protein into the PSI complex. Required for binding of PsaD and PsaE to PSI. PSI is a plastocyanin/cytochrome c6-ferredoxin oxidoreductase, converting photonic excitation into a charge separation, which transfers an electron from the donor P700 chlorophyll pair to the spectroscopically characterized acceptors A0, A1, FX, FA and FB in turn. The sequence is that of Photosystem I iron-sulfur center from Trieres chinensis (Marine centric diatom).